The sequence spans 465 residues: GTPase Der (465 aa).

2 consecutive EngA-type G domains span residues 3 to 167 (PLVA…PERG) and 179 to 352 (IHIA…VSAL). Residues 9 to 16 (GRPNVGKS), 57 to 61 (DTGGM), 119 to 122 (NKID), 185 to 192 (GRPNVGKS), 232 to 236 (DTAGL), and 297 to 300 (NKWD) contribute to the GTP site. Residues 353–437 (RQFSTSEVNK…PVRFLFREGD (85 aa)) form the KH-like domain.

The protein belongs to the TRAFAC class TrmE-Era-EngA-EngB-Septin-like GTPase superfamily. EngA (Der) GTPase family. In terms of assembly, associates with the 50S ribosomal subunit.

Its function is as follows. GTPase that plays an essential role in the late steps of ribosome biogenesis. This Xylella fastidiosa (strain 9a5c) protein is GTPase Der.